The sequence spans 661 residues: Transketolase (661 aa).

Histidine 30 is a binding site for substrate. Thiamine diphosphate-binding positions include histidine 70 and 118–120 (GPL). A disordered region spans residues 99–118 (STTPGHPEFRDTPGVEATTG). Aspartate 159 is a binding site for Mg(2+). Thiamine diphosphate-binding residues include glycine 160 and asparagine 189. Asparagine 189 and valine 191 together coordinate Mg(2+). The substrate site is built by histidine 266, arginine 357, and serine 384. Histidine 266 is a binding site for thiamine diphosphate. Residue glutamate 411 is the Proton donor of the active site. Residue phenylalanine 437 participates in thiamine diphosphate binding. Histidine 461, aspartate 469, and arginine 520 together coordinate substrate.

The protein belongs to the transketolase family. In terms of assembly, homodimer. Mg(2+) serves as cofactor. Ca(2+) is required as a cofactor. Requires Mn(2+) as cofactor. It depends on Co(2+) as a cofactor. The cofactor is thiamine diphosphate.

It carries out the reaction D-sedoheptulose 7-phosphate + D-glyceraldehyde 3-phosphate = aldehydo-D-ribose 5-phosphate + D-xylulose 5-phosphate. Its function is as follows. Catalyzes the transfer of a two-carbon ketol group from a ketose donor to an aldose acceptor, via a covalent intermediate with the cofactor thiamine pyrophosphate. The sequence is that of Transketolase (tkt) from Physarum polycephalum (Slime mold).